The sequence spans 41 residues: uncharacterized protein (41 aa).

This is an uncharacterized protein from Treponema pallidum (strain Nichols).